We begin with the raw amino-acid sequence, 101 residues long: Small ribosomal subunit protein uS14 (101 aa).

The protein belongs to the universal ribosomal protein uS14 family. Part of the 30S ribosomal subunit. Contacts proteins S3 and S10.

Binds 16S rRNA, required for the assembly of 30S particles and may also be responsible for determining the conformation of the 16S rRNA at the A site. The chain is Small ribosomal subunit protein uS14 from Pseudomonas aeruginosa (strain LESB58).